The sequence spans 223 residues: Coiled-coil domain-containing protein 124 (223 aa).

The segment at 1–126 (MPKKFQGENT…AEKAKSHLEV (126 aa)) is disordered. Residues 15 to 82 (ARARRAEAKA…LLEEEDSKLK (68 aa)) are a coiled coil. Composition is skewed to basic and acidic residues over residues 18–74 (RRAE…QRLL) and 99–126 (QIED…HLEV). Residues S141 and S194 each carry the phosphoserine modification. Positions 204–223 (WLRSPDNPMNQRAVPFNAPK) are disordered.

Belongs to the CCDC124 family. In terms of assembly, associates with translationally inactive ribosomes in the nonrotated state. Interacts with RASGEF1B. In terms of tissue distribution, ubiquitously expressed.

The protein resides in the cytoplasm. It is found in the cytoskeleton. Its subcellular location is the microtubule organizing center. The protein localises to the centrosome. It localises to the midbody. In terms of biological role, ribosome-binding protein involved in ribosome hibernation: associates with translationally inactive ribosomes and stabilizes the nonrotated conformation of the 80S ribosome, thereby promoting ribosome preservation and storage. Also required for proper progression of late cytokinetic stages. The sequence is that of Coiled-coil domain-containing protein 124 from Homo sapiens (Human).